The sequence spans 243 residues: Eukaryotic translation initiation factor 4E-2 (243 aa).

The protein belongs to the eukaryotic initiation factor 4E family. EIF4F is a multi-subunit complex, the composition of which varies with external and internal environmental conditions. It is composed of at least eIF4A, eIF4E and eIF4G. eIF4E is also known to interact with other partners.

Functionally, recognizes and binds the 7-methylguanosine-containing mRNA cap during an early step in the initiation of protein synthesis and facilitates ribosome binding by inducing the unwinding of the mRNAs secondary structures. This Schizosaccharomyces pombe (strain 972 / ATCC 24843) (Fission yeast) protein is Eukaryotic translation initiation factor 4E-2 (tif452).